Reading from the N-terminus, the 274-residue chain is Large ribosomal subunit protein uL2cz/uL2cy (274 aa).

Disordered stretches follow at residues 1–25 (MAIH…VKSN) and 224–274 (NPVD…RRSK).

This sequence belongs to the universal ribosomal protein uL2 family. Part of the 50S ribosomal subunit.

The protein localises to the plastid. The protein resides in the chloroplast. This is Large ribosomal subunit protein uL2cz/uL2cy (rpl2-A) from Aethionema cordifolium (Lebanon stonecress).